The chain runs to 298 residues: Acetylglutamate kinase (298 aa).

Residues 69 to 70, Arg-91, and Asn-191 each bind substrate; that span reads GG.

Belongs to the acetylglutamate kinase family. ArgB subfamily.

The protein localises to the cytoplasm. It carries out the reaction N-acetyl-L-glutamate + ATP = N-acetyl-L-glutamyl 5-phosphate + ADP. It participates in amino-acid biosynthesis; L-arginine biosynthesis; N(2)-acetyl-L-ornithine from L-glutamate: step 2/4. Functionally, catalyzes the ATP-dependent phosphorylation of N-acetyl-L-glutamate. The chain is Acetylglutamate kinase from Neisseria meningitidis serogroup A / serotype 4A (strain DSM 15465 / Z2491).